Reading from the N-terminus, the 68-residue chain is Probable tautomerase HP_0924 (68 aa).

The active-site Proton acceptor; via imino nitrogen is Pro-2.

This sequence belongs to the 4-oxalocrotonate tautomerase family.

In Helicobacter pylori (strain ATCC 700392 / 26695) (Campylobacter pylori), this protein is Probable tautomerase HP_0924.